The primary structure comprises 341 residues: Ribosomal RNA small subunit methyltransferase C (341 aa).

This sequence belongs to the methyltransferase superfamily. RsmC family. In terms of assembly, monomer.

The protein resides in the cytoplasm. It carries out the reaction guanosine(1207) in 16S rRNA + S-adenosyl-L-methionine = N(2)-methylguanosine(1207) in 16S rRNA + S-adenosyl-L-homocysteine + H(+). Its function is as follows. Specifically methylates the guanine in position 1207 of 16S rRNA in the 30S particle. In Shewanella pealeana (strain ATCC 700345 / ANG-SQ1), this protein is Ribosomal RNA small subunit methyltransferase C.